The following is a 238-amino-acid chain: Ribonuclease PH (238 aa).

Phosphate-binding positions include Arg86 and 124 to 126 (GTR).

This sequence belongs to the RNase PH family. In terms of assembly, homohexameric ring arranged as a trimer of dimers.

The enzyme catalyses tRNA(n+1) + phosphate = tRNA(n) + a ribonucleoside 5'-diphosphate. Its function is as follows. Phosphorolytic 3'-5' exoribonuclease that plays an important role in tRNA 3'-end maturation. Removes nucleotide residues following the 3'-CCA terminus of tRNAs; can also add nucleotides to the ends of RNA molecules by using nucleoside diphosphates as substrates, but this may not be physiologically important. Probably plays a role in initiation of 16S rRNA degradation (leading to ribosome degradation) during starvation. In Escherichia coli O6:K15:H31 (strain 536 / UPEC), this protein is Ribonuclease PH.